We begin with the raw amino-acid sequence, 155 residues long: Deoxyuridine 5'-triphosphate nucleotidohydrolase (155 aa).

Residues 74–76 (RSG), N87, and 91–93 (LID) contribute to the substrate site.

It belongs to the dUTPase family. The cofactor is Mg(2+).

The enzyme catalyses dUTP + H2O = dUMP + diphosphate + H(+). The protein operates within pyrimidine metabolism; dUMP biosynthesis; dUMP from dCTP (dUTP route): step 2/2. In terms of biological role, this enzyme is involved in nucleotide metabolism: it produces dUMP, the immediate precursor of thymidine nucleotides and it decreases the intracellular concentration of dUTP so that uracil cannot be incorporated into DNA. This chain is Deoxyuridine 5'-triphosphate nucleotidohydrolase, found in Xylella fastidiosa (strain M23).